Consider the following 465-residue polypeptide: Chromosomal replication initiator protein DnaA (465 aa).

A domain I, interacts with DnaA modulators region spans residues 1 to 87; it reads MLWTDCLTRL…RPGSILSSSE (87 aa). The tract at residues 81–123 is disordered; that stretch reads SILSSSEQPATTTAALQTAPIPQPAKGKREPEPVANTAVSSKS. Residues 88-100 are compositionally biased toward low complexity; the sequence is QPATTTAALQTAP. The interval 88–127 is domain II; it reads QPATTTAALQTAPIPQPAKGKREPEPVANTAVSSKSSKKK. Residues 128 to 345 form a domain III, AAA+ region region; sequence LLNPQFTFSL…GALNKVVAIS (218 aa). ATP-binding residues include Gly173, Gly175, Lys176, and Thr177. A domain IV, binds dsDNA region spans residues 346 to 465; it reads RFKGAPIDLD…YKNLLRLLQS (120 aa).

The protein belongs to the DnaA family. As to quaternary structure, oligomerizes as a right-handed, spiral filament on DNA at oriC.

It is found in the cytoplasm. In terms of biological role, plays an essential role in the initiation and regulation of chromosomal replication. ATP-DnaA binds to the origin of replication (oriC) to initiate formation of the DNA replication initiation complex once per cell cycle. Binds the DnaA box (a 9 base pair repeat at the origin) and separates the double-stranded (ds)DNA. Forms a right-handed helical filament on oriC DNA; dsDNA binds to the exterior of the filament while single-stranded (ss)DNA is stabiized in the filament's interior. The ATP-DnaA-oriC complex binds and stabilizes one strand of the AT-rich DNA unwinding element (DUE), permitting loading of DNA polymerase. After initiation quickly degrades to an ADP-DnaA complex that is not apt for DNA replication. Binds acidic phospholipids. This is Chromosomal replication initiator protein DnaA from Acinetobacter baumannii (strain SDF).